Here is a 256-residue protein sequence, read N- to C-terminus: MKIYKLDAIVLKSRDMREADKILTVYSIQRGKQRIVAHGAAKPNSRKRGAVQPFCFSEFMLHRGREIDAISQAELKEGFAEIRYDLDRLTAAAYITELLDGFVAEGEPNQNLFSLLYSALHLIAVGNSEMILRGFEAKLLGFSGLQPDLTNCSVCGAEIRETKVSFAVQQGGILCKDCATHEKRILKFSRGTVEVLKTLYRWELTKLQQLKVSEPLKTELSALLRSYIEYYLEKKLKTTEFMDRLYKSNLGRGTNI.

The protein belongs to the RecO family.

Involved in DNA repair and RecF pathway recombination. The sequence is that of DNA repair protein RecO from Desulforamulus reducens (strain ATCC BAA-1160 / DSM 100696 / MI-1) (Desulfotomaculum reducens).